Here is a 73-residue protein sequence, read N- to C-terminus: MGDCRPLGFLIGLPFALVALVLALVGAVIWIIGTVLSCLCPCCFCFAALANFAVDLIKLPIKVLRWFTHSIPC.

An N-terminal signal peptide occupies residues 1 to 27; sequence MGDCRPLGFLIGLPFALVALVLALVGA.

Confined to the vasculature of various organs, including seedling roots, leaves, cotyledons, sepals and petals. Also accumulates in root hair cells.

Its subcellular location is the secreted. Functionally, signaling peptide involved in the regulation of lateral organs separation. This Arabidopsis thaliana (Mouse-ear cress) protein is Signaling peptide TAXIMIN 2.